The primary structure comprises 213 residues: N-(5'-phosphoribosyl)anthranilate isomerase (213 aa).

Belongs to the TrpF family.

It carries out the reaction N-(5-phospho-beta-D-ribosyl)anthranilate = 1-(2-carboxyphenylamino)-1-deoxy-D-ribulose 5-phosphate. It functions in the pathway amino-acid biosynthesis; L-tryptophan biosynthesis; L-tryptophan from chorismate: step 3/5. In Rhodopseudomonas palustris (strain ATCC BAA-98 / CGA009), this protein is N-(5'-phosphoribosyl)anthranilate isomerase.